The primary structure comprises 95 residues: Aspartyl/glutamyl-tRNA(Asn/Gln) amidotransferase subunit C (95 aa).

It belongs to the GatC family. As to quaternary structure, heterotrimer of A, B and C subunits.

It catalyses the reaction L-glutamyl-tRNA(Gln) + L-glutamine + ATP + H2O = L-glutaminyl-tRNA(Gln) + L-glutamate + ADP + phosphate + H(+). The enzyme catalyses L-aspartyl-tRNA(Asn) + L-glutamine + ATP + H2O = L-asparaginyl-tRNA(Asn) + L-glutamate + ADP + phosphate + 2 H(+). Functionally, allows the formation of correctly charged Asn-tRNA(Asn) or Gln-tRNA(Gln) through the transamidation of misacylated Asp-tRNA(Asn) or Glu-tRNA(Gln) in organisms which lack either or both of asparaginyl-tRNA or glutaminyl-tRNA synthetases. The reaction takes place in the presence of glutamine and ATP through an activated phospho-Asp-tRNA(Asn) or phospho-Glu-tRNA(Gln). In Clostridium botulinum (strain ATCC 19397 / Type A), this protein is Aspartyl/glutamyl-tRNA(Asn/Gln) amidotransferase subunit C.